The chain runs to 353 residues: Protein-glutamate methylesterase/protein-glutamine glutaminase 3 (353 aa).

The region spanning 3-120 is the Response regulatory domain; the sequence is KVLIADDSAL…SSSSDMKKVA (118 aa). D54 carries the post-translational modification 4-aspartylphosphate. One can recognise a CheB-type methylesterase domain in the interval 158–353; that stretch reads PRPGREVTKA…AREIIRAVNR (196 aa). Residues S173, H200, and D296 contribute to the active site.

It belongs to the CheB family. Post-translationally, phosphorylated by CheA. Phosphorylation of the N-terminal regulatory domain activates the methylesterase activity.

Its subcellular location is the cytoplasm. It catalyses the reaction [protein]-L-glutamate 5-O-methyl ester + H2O = L-glutamyl-[protein] + methanol + H(+). The enzyme catalyses L-glutaminyl-[protein] + H2O = L-glutamyl-[protein] + NH4(+). Its function is as follows. Involved in chemotaxis. Part of a chemotaxis signal transduction system that modulates chemotaxis in response to various stimuli. Catalyzes the demethylation of specific methylglutamate residues introduced into the chemoreceptors (methyl-accepting chemotaxis proteins or MCP) by CheR. Also mediates the irreversible deamidation of specific glutamine residues to glutamic acid. This chain is Protein-glutamate methylesterase/protein-glutamine glutaminase 3, found in Syntrophomonas wolfei subsp. wolfei (strain DSM 2245B / Goettingen).